The primary structure comprises 364 residues: Chorismate synthase (364 aa).

An NADP(+)-binding site is contributed by Arg-47. FMN contacts are provided by residues 124 to 126 (RAS), Gly-287, 302 to 306 (KPTAT), and Arg-328.

This sequence belongs to the chorismate synthase family. In terms of assembly, homotetramer. The cofactor is FMNH2.

The catalysed reaction is 5-O-(1-carboxyvinyl)-3-phosphoshikimate = chorismate + phosphate. Its pathway is metabolic intermediate biosynthesis; chorismate biosynthesis; chorismate from D-erythrose 4-phosphate and phosphoenolpyruvate: step 7/7. Functionally, catalyzes the anti-1,4-elimination of the C-3 phosphate and the C-6 proR hydrogen from 5-enolpyruvylshikimate-3-phosphate (EPSP) to yield chorismate, which is the branch point compound that serves as the starting substrate for the three terminal pathways of aromatic amino acid biosynthesis. This reaction introduces a second double bond into the aromatic ring system. The sequence is that of Chorismate synthase from Prochlorococcus marinus subsp. pastoris (strain CCMP1986 / NIES-2087 / MED4).